A 1203-amino-acid polypeptide reads, in one-letter code: Exonuclease/helicase subunit RexA (1203 aa).

The UvrD-like helicase ATP-binding domain maps to 4 to 472 (VKLTPEQNEA…IRLKENFRSR (469 aa)). 25–32 (ASAGSGKT) contributes to the ATP binding site. The 283-residue stretch at 503–785 (VQGNISDYPV…RVMTFHKSKG (283 aa)) folds into the UvrD-like helicase C-terminal domain.

This sequence belongs to the helicase family. AddA subfamily. Heterodimer of RexA (AddA) and RexB. Mg(2+) serves as cofactor.

It catalyses the reaction Couples ATP hydrolysis with the unwinding of duplex DNA by translocating in the 3'-5' direction.. It carries out the reaction ATP + H2O = ADP + phosphate + H(+). Functionally, the heterodimer acts both as an ATP-dependent DNA helicase and an ATP-dependent, dual-direction single-stranded exonuclease. Recognizes the L.lactis chi site (5'-GCGCGTG-3'), which stimulates homologous recombination. The RexA (AddA) nuclease domain is required for chi fragment generation; this subunit has 3'-&gt;5' exonuclease activity and probably also performs the helicase function. The chain is Exonuclease/helicase subunit RexA from Lactococcus lactis subsp. cremoris (strain MG1363).